Reading from the N-terminus, the 148-residue chain is 3-dehydroquinate dehydratase (148 aa).

Residue Tyr-23 is the Proton acceptor of the active site. Residues Asn-75, His-81, and Asp-88 each contribute to the substrate site. His-101 serves as the catalytic Proton donor. Substrate contacts are provided by residues 102–103 (LS) and Arg-112.

This sequence belongs to the type-II 3-dehydroquinase family. As to quaternary structure, homododecamer.

It catalyses the reaction 3-dehydroquinate = 3-dehydroshikimate + H2O. It functions in the pathway metabolic intermediate biosynthesis; chorismate biosynthesis; chorismate from D-erythrose 4-phosphate and phosphoenolpyruvate: step 3/7. Functionally, catalyzes a trans-dehydration via an enolate intermediate. The chain is 3-dehydroquinate dehydratase from Xanthomonas oryzae pv. oryzae (strain MAFF 311018).